Reading from the N-terminus, the 441-residue chain is 3-phosphoshikimate 1-carboxyvinyltransferase (441 aa).

Polar residues predominate over residues 1–10; that stretch reads MSVTSTASSS. The disordered stretch occupies residues 1 to 21; it reads MSVTSTASSSRELRAGGGLSG. 3-phosphoshikimate-binding residues include Lys-29, Ser-30, and Arg-34. Position 29 (Lys-29) interacts with phosphoenolpyruvate. Phosphoenolpyruvate contacts are provided by Gly-103 and Arg-132. 3-phosphoshikimate contacts are provided by Ser-177, Gln-179, Asp-328, and Lys-355. Gln-179 lines the phosphoenolpyruvate pocket. Asp-328 functions as the Proton acceptor in the catalytic mechanism. Phosphoenolpyruvate contacts are provided by Arg-359 and Arg-401.

It belongs to the EPSP synthase family. As to quaternary structure, monomer.

It is found in the cytoplasm. The catalysed reaction is 3-phosphoshikimate + phosphoenolpyruvate = 5-O-(1-carboxyvinyl)-3-phosphoshikimate + phosphate. It functions in the pathway metabolic intermediate biosynthesis; chorismate biosynthesis; chorismate from D-erythrose 4-phosphate and phosphoenolpyruvate: step 6/7. Functionally, catalyzes the transfer of the enolpyruvyl moiety of phosphoenolpyruvate (PEP) to the 5-hydroxyl of shikimate-3-phosphate (S3P) to produce enolpyruvyl shikimate-3-phosphate and inorganic phosphate. The chain is 3-phosphoshikimate 1-carboxyvinyltransferase from Prochlorococcus marinus (strain MIT 9303).